Consider the following 92-residue polypeptide: Large ribosomal subunit protein bL27 (92 aa).

The propeptide occupies 1–9 (MIKANLQLF).

It belongs to the bacterial ribosomal protein bL27 family. In terms of processing, the N-terminus is cleaved by ribosomal processing cysteine protease Prp.

This is Large ribosomal subunit protein bL27 from Acetivibrio thermocellus (strain ATCC 27405 / DSM 1237 / JCM 9322 / NBRC 103400 / NCIMB 10682 / NRRL B-4536 / VPI 7372) (Clostridium thermocellum).